The following is a 270-amino-acid chain: tRNA (guanine-N(1)-)-methyltransferase (270 aa).

S-adenosyl-L-methionine-binding positions include Gly-113 and 133–138 (IGDYVL). Residues 251–270 (APTEGTGLIHHRDVEGPGEG) form a disordered region. Positions 260-270 (HHRDVEGPGEG) are enriched in basic and acidic residues.

It belongs to the RNA methyltransferase TrmD family. As to quaternary structure, homodimer.

The protein resides in the cytoplasm. It carries out the reaction guanosine(37) in tRNA + S-adenosyl-L-methionine = N(1)-methylguanosine(37) in tRNA + S-adenosyl-L-homocysteine + H(+). Specifically methylates guanosine-37 in various tRNAs. This Frankia casuarinae (strain DSM 45818 / CECT 9043 / HFP020203 / CcI3) protein is tRNA (guanine-N(1)-)-methyltransferase.